Reading from the N-terminus, the 669-residue chain is Filensin (669 aa).

The tract at residues 1–33 (MYRRSYVFQARQERYERAQPAGPAAQPGGTAPG) is head. Serine 5 is modified (phosphoserine). The 286-residue stretch at 33–318 (GLAALQALGE…RIIEIEGSRL (286 aa)) folds into the IF rod domain. Residues 34 to 68 (LAALQALGERVAVQVQRARALQQRHAGLRRQLDAF) form a coil 1A region. Position 35 is an N-acetylalanine (alanine 35). Residues 69-77 (QRLGEQPGP) are linker 1. The tract at residues 78–177 (EDALARHVEA…RYKKNLLEIQ (100 aa)) is coil 1B. Residues 178–194 (TYITVLQQIVQTAPQVS) form a linker 12 region. The interval 195-318 (LVTGMRESGL…RIIEIEGSRL (124 aa)) is coil 2. Positions 319–669 (SSVFIETPIS…GEKSLPDTRA (351 aa)) are tail. Serine 339 is modified (phosphoserine). 3 disordered regions span residues 380 to 435 (VEET…GGQI), 449 to 468 (RVSG…FTKG), and 505 to 618 (HHDG…KALS). Residues 408–417 (SQPGAGGGHG) are compositionally biased toward gly residues. Glycine 432 carries N-myristoyl glycine lipidation. Phosphoserine is present on serine 513. A compositionally biased stretch (basic and acidic residues) spans 545–570 (NGLRAKEPKDLEEKDDDGKKEAEGSR). The span at 583–593 (PSTSHSQTSGS) shows a compositional bias: polar residues. Threonine 585 carries the post-translational modification Phosphothreonine.

Belongs to the intermediate filament family. Part of a complex required for lens intermediate filament formation composed of BFSP1, BFSP2 and CRYAA. Identified in a complex that contains VIM, EZR, AHNAK, BFSP1, BFSP2, ANK2, PLEC, PRX and spectrin. Found in a complex composed of PPL (via C-terminal linker domain), BFSP1 and BFSP2 in the retinal lens. Within the complex interacts with BFSP2. Interacts (via C-terminus) with MIP (via C-terminus) in aged lens fiber cells. Proteolytically cleaved during lens cell fiber differentiation with increased fragmentation as fiber cell age increases. In terms of processing, myristoylated at Gly-432 following proteolytic cleavage at Asp-431. Post-translationally, acetylated at Ala-35 following proteolytic cleavage at Leu-34. In terms of tissue distribution, detected in eye lens fiber cells (at protein level). Expressed in retinal lens epithelial cells (at protein level).

Its subcellular location is the cell membrane. It is found in the cytoplasm. It localises to the cytoskeleton. The protein localises to the cell cortex. Required for the correct formation of lens intermediate filaments as part of a complex composed of BFSP1, BFSP2 and CRYAA. Involved in altering the calcium regulation of MIP water permeability. The polypeptide is Filensin (Bfsp1) (Mus musculus (Mouse)).